Reading from the N-terminus, the 215-residue chain is Peptide methionine sulfoxide reductase MsrA (215 aa).

Residue Cys-58 is part of the active site.

Belongs to the MsrA Met sulfoxide reductase family.

It carries out the reaction L-methionyl-[protein] + [thioredoxin]-disulfide + H2O = L-methionyl-(S)-S-oxide-[protein] + [thioredoxin]-dithiol. It catalyses the reaction [thioredoxin]-disulfide + L-methionine + H2O = L-methionine (S)-S-oxide + [thioredoxin]-dithiol. Its function is as follows. Has an important function as a repair enzyme for proteins that have been inactivated by oxidation. Catalyzes the reversible oxidation-reduction of methionine sulfoxide in proteins to methionine. In Pseudomonas aeruginosa (strain LESB58), this protein is Peptide methionine sulfoxide reductase MsrA.